The following is a 1927-amino-acid chain: Lactase/phlorizin hydrolase (1927 aa).

The first 19 residues, 1–19 (MELSWHVVFIALLSFSCWG), serve as a signal peptide directing secretion. Residues 20–868 (SDWESDRNFI…NTVNLPSKVR (849 aa)) constitute a propeptide, XBetaGly. Topologically, residues 20–1882 (SDWESDRNFI…LMLGTTEAQT (1863 aa)) are extracellular. N42 carries N-linked (GlcNAc...) asparagine glycosylation. The interval 44 to 286 (SGLLGDQSSN…FIFNLKLPDC (243 aa)) is glycosyl hydrolase-1 1; Region I. Positions 362-855 (IWEAFANQSR…GFLTKGAKRL (494 aa)) are glycosyl hydrolase-1 2; Region II. 7 N-linked (GlcNAc...) asparagine glycosylation sites follow: N368, N418, N512, N821, N934, N946, and N989. The tract at residues 902–1366 (TFRDDFLWGV…EVITNNGMPL (465 aa)) is glycosyl hydrolase-1 3; Region III. Phlorizin hydrolase/glycosylceramidase activity. E1065 acts as the Proton donor; for phlorizin hydrolase/Glycosylceramidase activity in catalysis. N-linked (GlcNAc...) asparagine glycosylation occurs at N1174. Residues 1220-1244 (RLNPPSYEDDQEMAEEEDPSWPSTA) are disordered. Residues 1226–1238 (YEDDQEMAEEEDP) show a composition bias toward acidic residues. The active-site Nucleophile; for phlorizin hydrolase/Glycosylceramidase activity is E1273. N-linked (GlcNAc...) asparagine glycans are attached at residues N1340 and N1508. Residues 1373–1846 (LYGRFPEGFI…CNGFPDPATG (474 aa)) are glycosyl hydrolase-1 4; Region IV. Lactase activity. The active-site Proton donor; for lactase activity is E1538. Residues 1647–1927 (RDRSLAAGLN…QQELSPVSSF (281 aa)) are required for homodimerization and transport to the plasma membrane. N-linked (GlcNAc...) asparagine glycans are attached at residues N1656 and N1672. Catalysis depends on E1749, which acts as the Nucleophile; for lactase activity. 2 N-linked (GlcNAc...) asparagine glycosylation sites follow: N1761 and N1814. A helical transmembrane segment spans residues 1883–1901 (ALYVLFSLVLLGVCGLAFL). The Cytoplasmic segment spans residues 1902-1927 (SYKYCKRSKQGKTQRSQQELSPVSSF).

This sequence belongs to the glycosyl hydrolase 1 family. As to quaternary structure, homodimer. Post-translationally, N-glycosylated. As to expression, specifically expressed in small intestine.

The protein localises to the apical cell membrane. The catalysed reaction is lactose + H2O = beta-D-galactose + D-glucose. It carries out the reaction phlorizin + H2O = phloretin + beta-D-glucose. It catalyses the reaction D-cellobiose + H2O = beta-D-glucose + D-glucose. The enzyme catalyses quercetin 4'-O-beta-D-glucoside + H2O = quercetin + beta-D-glucose. The catalysed reaction is quercetin 3-O-beta-D-glucoside + H2O = quercetin + beta-D-glucose. It carries out the reaction kaempferol 3-O-beta-D-glucoside + H2O = kaempferol + beta-D-glucose. It catalyses the reaction luteolin 7-O-beta-D-glucoside + H2O = luteolin + beta-D-glucose. The enzyme catalyses luteolin 4'-O-beta-D-glucoside + H2O = luteolin + beta-D-glucose. The catalysed reaction is (2S)-naringenin 7-O-beta-D-glucoside + H2O = (2S)-naringenin + beta-D-glucose. It carries out the reaction eriodictyol-7-O-beta-D-glucoside + H2O = (S)-eriodictyol + beta-D-glucose. It catalyses the reaction apigenin 7-O-beta-D-glucoside + H2O = apigenin + beta-D-glucose. The enzyme catalyses daidzein 7-O-beta-D-glucoside + H2O = daidzein + beta-D-glucose + H(+). The catalysed reaction is genistein 7-O-beta-D-glucoside + H2O = genistein + beta-D-glucose. It carries out the reaction a beta-D-galactosyl-N-acylsphingosine + H2O = a ceramide + beta-D-galactose.. It catalyses the reaction beta-D-glucosyl-(1&lt;-&gt;1')-N-hexadecanoylsphing-4-enine + H2O = N-hexadecanoylsphing-4-enine + beta-D-glucose. The enzyme catalyses beta-D-galactosyl-(1&lt;-&gt;1')-N-hexadecanoylsphing-4-enine + H2O = beta-D-galactose + N-hexadecanoylsphing-4-enine. The catalysed reaction is beta-D-galactosyl-(1&lt;-&gt;1')-N-hexadecanoylsphinganine + H2O = N-hexadecanoylsphinganine + beta-D-galactose. It carries out the reaction beta-D-glucosyl-(1&lt;-&gt;1')-N-hexadecanoylsphinganine + H2O = N-hexadecanoylsphinganine + beta-D-glucose. Its function is as follows. Broad specificity glycosidase of the intestinal brush border membrane that hydrolyzes lactose, the main sugar in mammalian milk, to produce D-glucose and D-galactose. The mature protein is composed of two domains that catalyze the hydrolysis of beta-glucopyranosides and beta-galactopyranosides, with a preference for hydrophilic aglycones (in lactose and cellobiose) for one domain and hydrophobic aglycones (in phlorizin and glycosylceramides) for the other. This Homo sapiens (Human) protein is Lactase/phlorizin hydrolase.